The chain runs to 187 residues: Threonylcarbamoyl-AMP synthase (187 aa).

One can recognise a YrdC-like domain in the interval 4-187 (TLDLDRAVAT…DARSGQILRD (184 aa)).

Belongs to the SUA5 family. TsaC subfamily.

It localises to the cytoplasm. The catalysed reaction is L-threonine + hydrogencarbonate + ATP = L-threonylcarbamoyladenylate + diphosphate + H2O. Functionally, required for the formation of a threonylcarbamoyl group on adenosine at position 37 (t(6)A37) in tRNAs that read codons beginning with adenine. Catalyzes the conversion of L-threonine, HCO(3)(-)/CO(2) and ATP to give threonylcarbamoyl-AMP (TC-AMP) as the acyladenylate intermediate, with the release of diphosphate. In Xanthomonas euvesicatoria pv. vesicatoria (strain 85-10) (Xanthomonas campestris pv. vesicatoria), this protein is Threonylcarbamoyl-AMP synthase.